The sequence spans 208 residues: MEPELDLTLKLGLPNSTVETHLTLSPPTTTTDQGTNVVDGGEVINHRRGLLGDDEVIHNEPTRNNVEFNIRIYNYVFQQFVGAPNTLNFAPYPMPPSPAPAPETPPVSDEYVLIDVPARRARRNNSTVMTNSWKENATPKRIRGCGGFCGGRIEGMKKCTNMNCNALNTPMWRRGPLGPKSLCNACGIKFRKEEERKAKRNVVIVLDD.

A GATA-type; atypical zinc finger spans residues 155 to 208 (GMKKCTNMNCNALNTPMWRRGPLGPKSLCNACGIKFRKEEERKAKRNVVIVLDD).

The protein belongs to the type IV zinc-finger family. Class B subfamily.

It localises to the nucleus. Its function is as follows. Transcriptional regulator that specifically binds 5'-GATA-3' or 5'-GAT-3' motifs within gene promoters. The protein is GATA transcription factor 29 (GATA29) of Arabidopsis thaliana (Mouse-ear cress).